Here is a 589-residue protein sequence, read N- to C-terminus: Actin-histidine N-methyltransferase (589 aa).

Positions 1–22 (MGKKSRVKTQKSGTGATATVSP) are disordered. Positions 10-20 (QKSGTGATATV) are enriched in polar residues. S-adenosyl-L-methionine contacts are provided by residues Arg75, 104–106 (EGF), Arg254, 275–279 (DMCNH), and 325–327 (SGF). An SET domain is found at 94–314 (EGFEMVNFKE…AGEQIYIFYG (221 aa)). The residue at position 513 (Ser513) is a Phosphoserine. The tract at residues 547–589 (LVNGERSFPNGTRSEEDLKQEERKRAKGDAKESSSDSTDAVKE) is disordered. A compositionally biased stretch (basic and acidic residues) spans 559-589 (RSEEDLKQEERKRAKGDAKESSSDSTDAVKE).

It belongs to the class V-like SAM-binding methyltransferase superfamily. SETD3 actin-histidine methyltransferase family. As to quaternary structure, interacts with MYOD1. In terms of processing, phosphorylated by GSK3B, which is required for recognition by the SCF(FBXW7) complex and subsequent degradation. Post-translationally, ubiquitinated by the SCF(FBXW7) complex following phosphorylation by GSK3B, leading to its degradation by the proteasome.

It is found in the cytoplasm. Its subcellular location is the nucleus. It catalyses the reaction L-histidyl-[protein] + S-adenosyl-L-methionine = N(tele)-methyl-L-histidyl-[protein] + S-adenosyl-L-homocysteine + H(+). Its function is as follows. Protein-histidine N-methyltransferase that specifically mediates 3-methylhistidine (tele-methylhistidine) methylation of actin at 'His-73'. Histidine methylation of actin is required for smooth muscle contraction of the laboring uterus during delivery. Does not have protein-lysine N-methyltransferase activity and probably only catalyzes histidine methylation of actin. The chain is Actin-histidine N-methyltransferase from Dasypus novemcinctus (Nine-banded armadillo).